The sequence spans 379 residues: Junctional adhesion molecule-like (379 aa).

A signal peptide spans 1-20; sequence MLCLLKLIVIPVILAPVGYP. At 21-281 the chain is on the extracellular side; it reads QGLPGLTVSS…QQGILNGNQL (261 aa). Ig-like V-type domains lie at 24–135 and 140–250; these read PGLT…KPVE and PEEP…KTIV. Cys-45 and Cys-119 are joined by a disulfide. Asn-79, Asn-89, and Asn-125 each carry an N-linked (GlcNAc...) asparagine glycan. An intrachain disulfide couples Cys-158 to Cys-236. Residues 282-302 form a helical membrane-spanning segment; the sequence is VIIVGIVCATFLLLPVLILIV. The Cytoplasmic portion of the chain corresponds to 303-379; it reads KKAKWNKSSV…SLVRSSVRSK (77 aa). A Phosphotyrosine modification is found at Tyr-355.

Belongs to the immunoglobulin superfamily. In terms of assembly, homodimer; active form in leukocyte-endothelial cell adhesion. Interacts (homodimeric form) with CXADR. Interacts (via cytoplasmic domain) with the PI3 kinase; upon CXADR-binding. Interacts with ITGA4 and ITGB1; integrin alpha-4/beta-1 may regulate leukocyte to endothelial cells adhesion by controlling JAML homodimerization. As to expression, expressed by gamma-delta intraepithelial T cells (at protein level).

It localises to the cell membrane. The protein localises to the cell junction. Transmembrane protein of the plasma membrane of leukocytes that control their migration and activation through interaction with CXADR, a plasma membrane receptor found on adjacent epithelial and endothelial cells. The interaction between both receptors mediates the activation of gamma-delta T-cells, a subpopulation of T-cells residing in epithelia and involved in tissue homeostasis and repair. Upon epithelial CXADR-binding, JAML induces downstream cell signaling events in gamma-delta T-cells through PI3-kinase and MAP kinases. It results in proliferation and production of cytokines and growth factors by T-cells that in turn stimulate epithelial tissues repair. It also controls the transmigration of leukocytes within epithelial and endothelial tissues through adhesive interactions with epithelial and endothelial CXADR. This Mus musculus (Mouse) protein is Junctional adhesion molecule-like.